The sequence spans 436 residues: Trigger factor (436 aa).

Residues 161–246 (GDQLNIDFVG…VNSVSEAELP (86 aa)) enclose the PPIase FKBP-type domain.

Belongs to the FKBP-type PPIase family. Tig subfamily.

The protein localises to the cytoplasm. It carries out the reaction [protein]-peptidylproline (omega=180) = [protein]-peptidylproline (omega=0). In terms of biological role, involved in protein export. Acts as a chaperone by maintaining the newly synthesized protein in an open conformation. Functions as a peptidyl-prolyl cis-trans isomerase. This is Trigger factor from Azotobacter vinelandii (strain DJ / ATCC BAA-1303).